The chain runs to 284 residues: 2-dehydro-3-deoxyphosphooctonate aldolase (284 aa).

This sequence belongs to the KdsA family.

The protein resides in the cytoplasm. It carries out the reaction D-arabinose 5-phosphate + phosphoenolpyruvate + H2O = 3-deoxy-alpha-D-manno-2-octulosonate-8-phosphate + phosphate. It participates in carbohydrate biosynthesis; 3-deoxy-D-manno-octulosonate biosynthesis; 3-deoxy-D-manno-octulosonate from D-ribulose 5-phosphate: step 2/3. It functions in the pathway bacterial outer membrane biogenesis; lipopolysaccharide biosynthesis. The polypeptide is 2-dehydro-3-deoxyphosphooctonate aldolase (Paraburkholderia xenovorans (strain LB400)).